A 100-amino-acid polypeptide reads, in one-letter code: Ferredoxin (100 aa).

A propeptide spanning residues 1-8 is cleaved from the precursor; it reads MLSQVCRF. The 2Fe-2S ferredoxin-type domain occupies 9–100; the sequence is GTITAVKGGV…GENDGAVFEL (92 aa). [2Fe-2S] cluster contacts are provided by cysteine 46, cysteine 52, cysteine 55, and cysteine 85.

It depends on [2Fe-2S] cluster as a cofactor.

It localises to the hydrogenosome. Its function is as follows. Ferredoxins are iron-sulfur proteins that transfer electrons in a wide variety of metabolic reactions. It links pyruvate:ferredoxin oxidoreductase to hydrogenase. The polypeptide is Ferredoxin (Trichomonas vaginalis).